A 394-amino-acid chain; its full sequence is Phosphorylated adapter RNA export protein (394 aa).

Composition is skewed to acidic residues over residues 1-18 (MAQEAGDMDDGQVSDSDS) and 65-77 (SSEESFSDSDDDS). Residues 1–109 (MAQEAGDMDD…DQSSQKPPIA (109 aa)) are disordered. Alanine 2 carries the post-translational modification N-acetylalanine. The necessary for interaction with CBP80 stretch occupies residues 2 to 329 (AQEAGDMDDG…KAARKRRIQV (328 aa)). A phosphoserine mark is found at serine 14, serine 16, serine 65, serine 66, serine 69, and serine 73. Residues 81–84 (KRKR) carry the Nuclear localization signal motif. A Nuclear export signal motif is present at residues 130–139 (VATELGILGM). A compositionally biased stretch (basic and acidic residues) spans 178 to 193 (YMHGGKKTGPKEEENG). The tract at residues 178–208 (YMHGGKKTGPKEEENGQGHPKRKRPVKDRVG) is disordered. Positions 198–201 (KRKR) match the Nuclear localization signal motif. Serine 226 carries the phosphoserine modification. The sufficient for poly U RNA-binding stretch occupies residues 228–328 (ERVADEISFR…KKAARKRRIQ (101 aa)). The interval 279–287 (GSRRRTPGG) is necessary for poly U RNA-binding and snRNA export. Threonine 296 carries the post-translational modification Phosphothreonine. 2 positions are modified to phosphoserine: serine 356 and serine 368. Positions 365 to 394 (LDESQEGHGETKLDAEEAIEVDHSHDLDMF) are disordered. Positions 369-394 (QEGHGETKLDAEEAIEVDHSHDLDMF) are enriched in basic and acidic residues.

This sequence belongs to the PHAX family. As to quaternary structure, found in a U snRNA export complex with PHAX/RNUXA, NCBP1/CBP80, NCBP2/CBP20, RAN, XPO1 and m7G-capped RNA. Part of a precomplex with PHAX/RNUXA, NCBP1/CBP80, NCBP2/CBP20 and m7G-capped RNA. Interacts with NCBP1/CBP80. Found in a complex with snoRNA, Interacts with NCBP2/CBP20. Interacts with DDX39A; this interaction stimulates PHAX RNA binding activity. Phosphorylated in the nucleus. Dephosphorylated in the cytoplasm.

The protein localises to the nucleus. It localises to the nucleoplasm. It is found in the cajal body. Its subcellular location is the cytoplasm. A phosphoprotein adapter involved in the XPO1-mediated U snRNA export from the nucleus. Bridge components required for U snRNA export, the cap binding complex (CBC)-bound snRNA on the one hand and the GTPase Ran in its active GTP-bound form together with the export receptor XPO1 on the other. Its phosphorylation in the nucleus is required for U snRNA export complex assembly and export, while its dephosphorylation in the cytoplasm causes export complex disassembly. It is recycled back to the nucleus via the importin alpha/beta heterodimeric import receptor. The directionality of nuclear export is thought to be conferred by an asymmetric distribution of the GTP- and GDP-bound forms of Ran between the cytoplasm and nucleus. Its compartmentalized phosphorylation cycle may also contribute to the directionality of export. Binds strongly to m7G-capped U1 and U5 small nuclear RNAs (snRNAs) in a sequence-unspecific manner and phosphorylation-independent manner. Also plays a role in the biogenesis of U3 small nucleolar RNA (snoRNA). Involved in the U3 snoRNA transport from nucleoplasm to Cajal bodies. Binds strongly to m7G-capped U3, U8 and U13 precursor snoRNAs and weakly to trimethylated (TMG)-capped U3, U8 and U13 snoRNAs. Also binds to telomerase RNA. This chain is Phosphorylated adapter RNA export protein (PHAX), found in Bos taurus (Bovine).